The primary structure comprises 330 residues: tRNA-modifying protein YgfZ (330 aa).

W28 and W192 together coordinate folate.

This sequence belongs to the tRNA-modifying YgfZ family.

It localises to the cytoplasm. Its function is as follows. Folate-binding protein involved in regulating the level of ATP-DnaA and in the modification of some tRNAs. It is probably a key factor in regulatory networks that act via tRNA modification, such as initiation of chromosomal replication. This chain is tRNA-modifying protein YgfZ, found in Blochmanniella pennsylvanica (strain BPEN).